We begin with the raw amino-acid sequence, 402 residues long: uncharacterized protein (402 aa).

11 consecutive transmembrane segments (helical) span residues F12–V32, G48–A68, T80–T100, A101–L121, G134–V154, Q168–L188, W212–F232, W248–A268, G291–G311, M339–F359, and M367–G387.

This sequence belongs to the major facilitator superfamily. Cyanate porter (TC 2.A.1.17) family.

Its subcellular location is the cell membrane. This is an uncharacterized protein from Bacillus subtilis (strain 168).